Consider the following 1401-residue polypeptide: DNA-directed RNA polymerase subunit beta' (1401 aa).

Residues Cys71, Cys73, Cys86, and Cys89 each coordinate Zn(2+). Mg(2+) contacts are provided by Asp462, Asp464, and Asp466. Cys810, Cys884, Cys891, and Cys894 together coordinate Zn(2+). Residues 1378 to 1401 are disordered; the sequence is EKQATIVPSAPEPEPLALPTPEQS.

This sequence belongs to the RNA polymerase beta' chain family. In terms of assembly, the RNAP catalytic core consists of 2 alpha, 1 beta, 1 beta' and 1 omega subunit. When a sigma factor is associated with the core the holoenzyme is formed, which can initiate transcription. The cofactor is Mg(2+). Requires Zn(2+) as cofactor.

The enzyme catalyses RNA(n) + a ribonucleoside 5'-triphosphate = RNA(n+1) + diphosphate. Functionally, DNA-dependent RNA polymerase catalyzes the transcription of DNA into RNA using the four ribonucleoside triphosphates as substrates. This is DNA-directed RNA polymerase subunit beta' from Rhodopseudomonas palustris (strain BisB18).